We begin with the raw amino-acid sequence, 30 residues long: Chassatide C3 (30 aa).

The cyclopeptide (Gly-Asn) cross-link spans 1-30 (GIPCGESCVWIPCISSALGCSCKNKVCYRN). 3 cysteine pairs are disulfide-bonded: cysteine 4–cysteine 20, cysteine 8–cysteine 22, and cysteine 13–cysteine 27.

In terms of processing, this is a cyclic peptide. Expressed in fruit, pedicel, stem and root but not in leaf (at protein level).

Probably participates in a plant defense mechanism. The polypeptide is Chassatide C3 (Chassalia chartacea (Chassalia curviflora)).